Reading from the N-terminus, the 138-residue chain is Small ribosomal subunit protein uS11 (138 aa).

Positions 1–12 (MAQAKKGGTAAK) are enriched in low complexity. Disordered regions lie at residues 1-32 (MAQA…AAHI) and 119-138 (ISDV…RRRV). A compositionally biased stretch (basic residues) spans 13 to 22 (KGQKTRRREK).

This sequence belongs to the universal ribosomal protein uS11 family. Part of the 30S ribosomal subunit. Interacts with proteins S7 and S18. Binds to IF-3.

Its function is as follows. Located on the platform of the 30S subunit, it bridges several disparate RNA helices of the 16S rRNA. Forms part of the Shine-Dalgarno cleft in the 70S ribosome. In Mycolicibacterium smegmatis (strain ATCC 700084 / mc(2)155) (Mycobacterium smegmatis), this protein is Small ribosomal subunit protein uS11.